Reading from the N-terminus, the 116-residue chain is Putative pterin-4-alpha-carbinolamine dehydratase (116 aa).

This sequence belongs to the pterin-4-alpha-carbinolamine dehydratase family.

The enzyme catalyses (4aS,6R)-4a-hydroxy-L-erythro-5,6,7,8-tetrahydrobiopterin = (6R)-L-erythro-6,7-dihydrobiopterin + H2O. This Stenotrophomonas maltophilia (strain K279a) protein is Putative pterin-4-alpha-carbinolamine dehydratase.